Consider the following 96-residue polypeptide: ESAT-6-like protein SAG0230 (96 aa).

It belongs to the WXG100 family. sagEsxA-like subfamily. In terms of assembly, homodimer.

In Streptococcus agalactiae serotype V (strain ATCC BAA-611 / 2603 V/R), this protein is ESAT-6-like protein SAG0230.